The chain runs to 341 residues: Phosphate acyltransferase (341 aa).

It belongs to the PlsX family. In terms of assembly, homodimer. Probably interacts with PlsY.

It is found in the cytoplasm. It catalyses the reaction a fatty acyl-[ACP] + phosphate = an acyl phosphate + holo-[ACP]. Its pathway is lipid metabolism; phospholipid metabolism. Catalyzes the reversible formation of acyl-phosphate (acyl-PO(4)) from acyl-[acyl-carrier-protein] (acyl-ACP). This enzyme utilizes acyl-ACP as fatty acyl donor, but not acyl-CoA. The sequence is that of Phosphate acyltransferase from Vibrio cholerae serotype O1 (strain ATCC 39541 / Classical Ogawa 395 / O395).